Reading from the N-terminus, the 96-residue chain is Protein CLAVATA 3 (96 aa).

An N-terminal signal peptide occupies residues 1–21 (MDSKSFLLLLLLFCFLFLHDA). A disordered region spans residues 68–96 (ELRTVPSGPDPLHHHVNPPRQPRNNFQLP). 2 positions are modified to hydroxyproline: P73 and P76. The O-linked (Ara...) hydroxyproline glycan is linked to P76.

The protein belongs to the CLV3/ESR signal peptide family. As to quaternary structure, interacts with the extracellular leucine-rich repeat region of CLV1. Interacts with CLV2. CLV3-derived CLE peptides interacts with a tetrameric complex made of two CLV2/CRN heterodimers. The MCLV3 peptide contains two hydroxyprolines, but hydroxylation had no direct effect on MCLV3 activity. Post-translationally, the O-glycosylation (arabinosylation) of the hydroxyproline P-76 enhances binding affinity of the MCLV3 peptide for its receptor. First detected in heart stage embryos in a patch of cells between the developing cotyledons. In vegetative and inflorescence meristems, expressed in a small cone of cells at the meristem apex.

It is found in the secreted. The protein localises to the extracellular space. In terms of biological role, extracellular signal that regulates meristem maintenance. Acts with CLV1 as a ligand-receptor pair in a signal transduction pathway coordinating growth between adjacent meristematic regions and controlling the balance between meristem cell proliferation and differentiation. Its function is as follows. The secreted peptide MCLV3 activates a signal transduction cascade to restrict WUSCHEL (WUS) expression, inducing shoot and root meristem consumption as cells differentiated into other organs. This chain is Protein CLAVATA 3, found in Arabidopsis thaliana (Mouse-ear cress).